The sequence spans 321 residues: Probable proline iminopeptidase (321 aa).

The AB hydrolase-1 domain maps to 35-296; that stretch reads KPVVFLHGGP…IVVPDAGHSM (262 aa). Ser-110 functions as the Nucleophile in the catalytic mechanism. The active site involves Asp-266. His-294 serves as the catalytic Proton donor.

This sequence belongs to the peptidase S33 family.

The protein localises to the cytoplasm. The catalysed reaction is Release of N-terminal proline from a peptide.. Its function is as follows. Specifically catalyzes the removal of N-terminal proline residues from peptides. The protein is Probable proline iminopeptidase (pip) of Leptolyngbya boryana (Plectonema boryanum).